The chain runs to 483 residues: ATP synthase subunit beta, chloroplastic (483 aa).

Gly-163–Thr-170 serves as a coordination point for ATP.

The protein belongs to the ATPase alpha/beta chains family. In terms of assembly, F-type ATPases have 2 components, CF(1) - the catalytic core - and CF(0) - the membrane proton channel. CF(1) has five subunits: alpha(3), beta(3), gamma(1), delta(1), epsilon(1). CF(0) has four main subunits: a(1), b(1), b'(1) and c(9-12).

The protein resides in the plastid. The protein localises to the chloroplast thylakoid membrane. It carries out the reaction ATP + H2O + 4 H(+)(in) = ADP + phosphate + 5 H(+)(out). In terms of biological role, produces ATP from ADP in the presence of a proton gradient across the membrane. The catalytic sites are hosted primarily by the beta subunits. The chain is ATP synthase subunit beta, chloroplastic from Ostreococcus tauri.